A 356-amino-acid chain; its full sequence is Stomatin-like protein 2, mitochondrial (356 aa).

A mitochondrion-targeting transit peptide spans 1–28 (MLARAARGTGALLLKGSVQASARAPRRA). Serine 17 is modified (phosphoserine; by PKC/PRKCZ). A Phosphotyrosine modification is found at tyrosine 124. Residue lysine 145 is modified to N6-acetyllysine; alternate. Lysine 145 is subject to N6-succinyllysine; alternate. A coiled-coil region spans residues 215 to 252 (INVAEGKKQAQILASEAEKAEQINQAAGEASAVLAKAK). Lysine 233 is subject to N6-acetyllysine. The segment at 326-356 (EAQDSVSSRSSRDVRSTDASLDEELDRVKLS) is disordered. A Phosphoserine modification is found at serine 330.

Belongs to the band 7/mec-2 family. As to quaternary structure, forms homooligomers. Interacts with MFN2; may form heterooligomers with this mediator of mitochondrial fusion. Interacts with PHB1 and PHB2; stabilizes and recruits them to cardiolipin-enriched mitochondrial membranes. Interacts with CACNA2D2.

It is found in the cell membrane. The protein localises to the mitochondrion. It localises to the mitochondrion inner membrane. The protein resides in the mitochondrion intermembrane space. Its subcellular location is the membrane raft. It is found in the cytoplasm. The protein localises to the cytoskeleton. Mitochondrial protein that probably regulates the biogenesis and the activity of mitochondria. Stimulates cardiolipin biosynthesis, binds cardiolipin-enriched membranes where it recruits and stabilizes some proteins including prohibitin and may therefore act in the organization of functional microdomains in mitochondrial membranes. Through regulation of the mitochondrial function may play a role into several biological processes including cell migration, cell proliferation, T-cell activation, calcium homeostasis and cellular response to stress. May play a role in calcium homeostasis through negative regulation of calcium efflux from mitochondria. Required for mitochondrial hyperfusion a pro-survival cellular response to stress which results in increased ATP production by mitochondria. May also regulate the organization of functional domains at the plasma membrane and play a role in T-cell activation through association with the T-cell receptor signaling complex and its regulation. This is Stomatin-like protein 2, mitochondrial (STOML2) from Bos taurus (Bovine).